Here is a 419-residue protein sequence, read N- to C-terminus: Equilibrative nucleotide transporter 5 (419 aa).

Transmembrane regions (helical) follow at residues 20–40, 56–76, 86–106, 108–128, 142–162, 186–206, 265–285, 292–312, 327–347, 354–374, and 393–413; these read MVVCCILGIGSLVSWNSLLSV, VLTFVYQPFSIGTIVIFAYNE, LIGYIVFTTSIFLLIILDLAT, GHGGIGPYIVLCAIVGSFGFA, LMCPELIQSFVAGLAVAGALT, IFLAISTLVEFLCVLLYAYVF, YVVNLFLIYVLTLSILPGFLY, GLGSWYALVLIAMYNWWDLVG, KGLTVAVLTRFLLVPAFYFTA, WMILLVSILGLTNGHLTVCIL, and LVLFILWGAFVGCALGWLWLI.

This sequence belongs to the SLC29A/ENT transporter (TC 2.A.57) family.

Its subcellular location is the cell membrane. Functionally, may be involved in nucleoside transport. In Arabidopsis thaliana (Mouse-ear cress), this protein is Equilibrative nucleotide transporter 5 (ENT5).